Consider the following 249-residue polypeptide: Aspartate/glutamate leucyltransferase (249 aa).

Belongs to the R-transferase family. Bpt subfamily.

The protein localises to the cytoplasm. It carries out the reaction N-terminal L-glutamyl-[protein] + L-leucyl-tRNA(Leu) = N-terminal L-leucyl-L-glutamyl-[protein] + tRNA(Leu) + H(+). The enzyme catalyses N-terminal L-aspartyl-[protein] + L-leucyl-tRNA(Leu) = N-terminal L-leucyl-L-aspartyl-[protein] + tRNA(Leu) + H(+). Functionally, functions in the N-end rule pathway of protein degradation where it conjugates Leu from its aminoacyl-tRNA to the N-termini of proteins containing an N-terminal aspartate or glutamate. The chain is Aspartate/glutamate leucyltransferase from Brucella abortus (strain 2308).